Reading from the N-terminus, the 493-residue chain is Alpha-amylase-related protein (493 aa).

A signal peptide spans 1–19 (MFKLAFTLTLCLAGSLSLA). Pyrrolidone carboxylic acid is present on Gln20. A disulfide bond links Cys47 and Cys103. Ca(2+)-binding residues include Asn117, Gln168, and Asp177. Cys156 and Cys170 are oxidised to a cystine. Arg205 contacts chloride. Asp207 serves as the catalytic Nucleophile. Residue His211 participates in Ca(2+) binding. The active-site Proton donor is Glu244. Residues Asn307 and Arg342 each contribute to the chloride site. 3 disulfides stabilise this stretch: Cys375-Cys381, Cys417-Cys440, and Cys447-Cys459.

The protein belongs to the glycosyl hydrolase 13 family. In terms of assembly, monomer. The cofactor is Ca(2+). It depends on chloride as a cofactor.

The protein localises to the secreted. It carries out the reaction Endohydrolysis of (1-&gt;4)-alpha-D-glucosidic linkages in polysaccharides containing three or more (1-&gt;4)-alpha-linked D-glucose units.. This chain is Alpha-amylase-related protein (Amyrel), found in Drosophila orena (Fruit fly).